A 566-amino-acid chain; its full sequence is MALTCTDMSDAVAGSDAEGLTADAIVVGAGLAGLVAACELADRGLRVLILDQENRANVGGQAFWSFGGLFLVNSPEQRRLGIRDSHELALQDWLGTAAFDRPEDYWPEQWAHAYVDFAAGEKRSWLRARGLKIFPLVGWAERGGYDAQGHGNSVPRFHITWGTGPALVDIFVRQLRDRPTVRFAHRHQVDKLIVEGNAVTGVRGTVLEPSDEPRGAPSSRKSVGKFEFRASAVIVASGGIGGNHELVRKNWPRRMGRIPKQLLSGVPAHVDGRMIGIAQKAGAAVINPDRMWHYTEGITNYDPIWPRHGIRIIPGPSSLWLDAAGKRLPVPLFPGFDTLGTLEYITKSGHDYTWFVLNAKIIEKEFALSGQEQNPDLTGRRLGQLLRSRAHAGPPGPVQAFIDRGVDCVHANSLRELVAAMNELPDVVPLDYETVAAAVTARDREVVNKYSKDGQITAIRAARRYRGDRFGRVVAPHRLTDPKAGPLIAVKLHILTRKTLGGIETDLDARVLKADGTPLAGLYAAGEVAGFGGGGVHGYRALEGTFLGGCIFSGRAAGRGAAEDIR.

23–54 serves as a coordination point for FAD; that stretch reads DAIVVGAGLAGLVAACELADRGLRVLILDQEN.

This sequence belongs to the FAD-dependent oxidoreductase 2 family. The cofactor is FAD.

It participates in lipid metabolism; steroid biosynthesis. Able to catalyze the elimination of the C-1 and C-2 hydrogen atoms of the A-ring from the polycyclic ring structure of 3-ketosteroids. The protein is KsdD-like steroid dehydrogenase Rv0785 of Mycobacterium tuberculosis (strain ATCC 25618 / H37Rv).